Here is a 348-residue protein sequence, read N- to C-terminus: Dihydroorotase (348 aa).

Residues His17 and His19 each contribute to the Zn(2+) site. Residues 19–21 (HLR) and Asn45 contribute to the substrate site. Lys103, His140, and His178 together coordinate Zn(2+). Lys103 is subject to N6-carboxylysine. His140 serves as a coordination point for substrate. Leu223 lines the substrate pocket. A Zn(2+)-binding site is contributed by Asp251. Residue Asp251 is part of the active site. The substrate site is built by His255 and Ala267.

The protein belongs to the metallo-dependent hydrolases superfamily. DHOase family. Class II DHOase subfamily. As to quaternary structure, homodimer. Requires Zn(2+) as cofactor.

It catalyses the reaction (S)-dihydroorotate + H2O = N-carbamoyl-L-aspartate + H(+). It participates in pyrimidine metabolism; UMP biosynthesis via de novo pathway; (S)-dihydroorotate from bicarbonate: step 3/3. Catalyzes the reversible cyclization of carbamoyl aspartate to dihydroorotate. This is Dihydroorotase from Shigella boydii serotype 18 (strain CDC 3083-94 / BS512).